Consider the following 506-residue polypeptide: Maturase K (506 aa).

The protein belongs to the intron maturase 2 family. MatK subfamily.

The protein resides in the plastid. It localises to the chloroplast. Its function is as follows. Usually encoded in the trnK tRNA gene intron. Probably assists in splicing its own and other chloroplast group II introns. This is Maturase K from Mimosa pudica (Sensitive plant).